Consider the following 582-residue polypeptide: 2-succinyl-5-enolpyruvyl-6-hydroxy-3-cyclohexene-1-carboxylate synthase (582 aa).

It belongs to the TPP enzyme family. MenD subfamily. Homodimer. The cofactor is Mg(2+). Mn(2+) is required as a cofactor. Thiamine diphosphate serves as cofactor.

The enzyme catalyses isochorismate + 2-oxoglutarate + H(+) = 5-enolpyruvoyl-6-hydroxy-2-succinyl-cyclohex-3-ene-1-carboxylate + CO2. Its pathway is quinol/quinone metabolism; 1,4-dihydroxy-2-naphthoate biosynthesis; 1,4-dihydroxy-2-naphthoate from chorismate: step 2/7. It participates in cofactor biosynthesis; phylloquinone biosynthesis. Its function is as follows. Catalyzes the thiamine diphosphate-dependent decarboxylation of 2-oxoglutarate and the subsequent addition of the resulting succinic semialdehyde-thiamine pyrophosphate anion to isochorismate to yield 2-succinyl-5-enolpyruvyl-6-hydroxy-3-cyclohexene-1-carboxylate (SEPHCHC). The chain is 2-succinyl-5-enolpyruvyl-6-hydroxy-3-cyclohexene-1-carboxylate synthase from Trichodesmium erythraeum (strain IMS101).